The following is a 239-amino-acid chain: EF-hand domain-containing protein D2 (239 aa).

The disordered stretch occupies residues 1–51; that stretch reads MATDELASKLSRRLQMEDEGGEATEQPGLNGAAAAAAEAPDETAQALGSAD. A2 is subject to N-acetylalanine. S11 bears the Phosphoserine mark. Positions 32–46 are enriched in low complexity; that stretch reads AAAAAAEAPDETAQA. A phosphoserine mark is found at S73 and S75. Phosphotyrosine is present on Y82. EF-hand domains are found at residues 91-126 and 127-162; these read KQIK…LGAP and QTHL…AAAG. Ca(2+)-binding residues include D104, D108, E115, D140, D142, D144, K146, and E151. K232 carries the post-translational modification N6-acetyllysine.

As to quaternary structure, interacts with CASP9; with inactive form.

Its subcellular location is the membrane raft. May regulate B-cell receptor (BCR)-induced immature and primary B-cell apoptosis. Plays a role as negative regulator of the canonical NF-kappa-B-activating branch. Controls spontaneous apoptosis through the regulation of BCL2L1 abundance. This Rattus norvegicus (Rat) protein is EF-hand domain-containing protein D2 (Efhd2).